The following is a 1118-amino-acid chain: Repetin (1118 aa).

Residues 1 to 91 (MPQLLNSILN…VQACHHKLDS (91 aa)) are S-100-like. EF-hand domains follow at residues 13 to 48 (KVFQ…LRRP) and 49 to 84 (NDPE…LVQA). Ca(2+) is bound by residues serine 27, glutamate 32, aspartate 62, aspartate 64, asparagine 66, tyrosine 68, and glutamate 73. The tract at residues 94–1118 (YGSRTSSQKE…YVQEQAAYQY (1025 aa)) is disordered. The segment covering 100–115 (SQKEHDQEGTRSHKFS) has biased composition (basic and acidic residues). The span at 138 to 148 (SEGQHQNVQHD) shows a compositional bias: polar residues. Composition is skewed to basic and acidic residues over residues 149–164 (QSQR…DTDP) and 172–186 (FHGD…RQDT). The span at 237-252 (GQSKTSGQQSSHGQSG) shows a compositional bias: low complexity. Residues 259 to 299 (YSSQTSQQESDSYEQYGSQHQKSGNSQTERQGQNSQYGQTN) are compositionally biased toward polar residues. 48 tandem repeats follow at residues 273–284 (QYGSQHQKSGNS), 285–296 (QTERQGQNSQYG), 297–308 (QTNKKGHSSYHE), 309–320 (QTEGQGQSFHYG), 321–332 (QKGRKDQSFQQG), 333–344 (QKGRKDQSPHLG), 345–356 (QKGRQDQSPHRG), 357–368 (QKGRQDQSPHQG), 369–380 (QKGRQDQSPHRG), 381–392 (QKGRQDQSPHQG), 393–404 (QKGRQDQSPHLG), 405–416 (QKGRQDQSPHQG), 417–428 (QKGRQDQSPHQG), 429–440 (QKGRQDQSSHQG), 441–452 (QKGRQDQSSHQG), 453–464 (QKGRQDQSSHQG), 465–476 (QKGRQDQSSHQG), 477–488 (QREGQDQNSQWH), 489–500 (RTDSQGQSFHYG), 501–512 (QTGGHSLSSHQG), 513–524 (QTDSQGQNSNWH), 525–536 (RTDSQGQSFHYG), 537–548 (QTGGQGLSSHQG), 549–560 (QTDSQGQNSNWH), 561–572 (RTDSQGQSFHFD), 573–584 (QAGREVQGSHHG), 585–596 (QTDRQSQNSNWH), 597–608 (RTDSQGQSFHFD), 609–620 (QAGKEVQGSHQG), 621–632 (QTDSQGQSSHWH), 633–644 (QTDRQGQSSQQG), 645–656 (HKDRQGQNTHQG), 657–668 (QKGRQDLSPHQG), 669–680 (QKGRQDQSPHLG), 681–692 (QKGRHDQSPHQG), 693–704 (QKGRHDQSPHQG), 705–716 (QKGRQDLSSHQG), 717–728 (QKGRQDQSPHLG), 729–740 (QKGRHDQSPHRG), 741–752 (QKGRQDQSPHQG), 753–764 (QKGRQDQSSHQG), 765–776 (QREGQDQNSHWH), 777–788 (RTDRQGQSFHYG), 789–800 (QTGGQGLSSHQG), 801–812 (QTDSQGQNSQWH), 813–824 (RTDSQGQSFHFD), 825–836 (QAGREGQSSHHG), and 837–848 (QTDRQSQSSHCG). The interval 273 to 848 (QYGSQHQKSG…DRQSQSSHCG (576 aa)) is 48 X 12 AA approximate tandem repeats of Q-[KT]-[GD]-[RS]-Q-[DG]-Q-S-[PS]-H-X-G. The interval 321 to 764 (QKGRKDQSFQ…GRQDQSSHQG (444 aa)) is 22 X 12 AA approximate tandem repeats of Q-K-G-R-Q-D-Q-S-P-H-Q-G. 2 stretches are compositionally biased toward basic and acidic residues: residues 347–363 (GRQD…RQDQ) and 371–387 (GRQD…RQDQ). Over residues 434–466 (DQSSHQGQKGRQDQSSHQGQKGRQDQSSHQGQK) the composition is skewed to polar residues. Basic and acidic residues predominate over residues 467-481 (GRQDQSSHQGQREGQ). Polar residues-rich tracts occupy residues 482–535 (DQNS…SFHY) and 543–570 (LSSH…QSFH). 2 stretches are compositionally biased toward polar residues: residues 587-606 (DRQS…QSFH) and 616-643 (GSHQ…SSQQ). Residues 710-726 (DLSSHQGQKGRQDQSPH) are compositionally biased toward polar residues. Composition is skewed to basic and acidic residues over residues 731–747 (GRHD…RQDQ) and 755–769 (GRQD…REGQ). 3 stretches are compositionally biased toward polar residues: residues 795–822 (LSSH…QSFH), 833–848 (SHHG…SHCG), and 855–864 (TENQGQNRHS). The span at 865-875 (LGTDRTRRDSY) shows a compositional bias: basic and acidic residues. Residues 876–889 (VEQSGRSVKLSQQN) show a composition bias toward polar residues. 5 stretches are compositionally biased toward basic and acidic residues: residues 890–908 (SREE…RREQ), 947–965 (EQDH…HSVE), 978–998 (THEE…DEQN), 1005–1045 (QTHE…KEKY), and 1056–1065 (PNREKSHMSE).

The protein belongs to the S100-fused protein family. Potential substrate of transglutaminase. Some arginines are probably converted to citrullines by peptidylarginine deimidase. Detectable in the stratified internal epithelia of forestomach and tongue and to a lesser degree in normal skin epidermis, where it is restricted to the differentiated suprabasal cell layers. Overexpressed in skin tumors.

The protein resides in the secreted. The protein localises to the extracellular space. It localises to the extracellular matrix. Functionally, involved in the cornified cell envelope formation. Multifunctional epidermal matrix protein. The sequence is that of Repetin (Rptn) from Mus musculus (Mouse).